Consider the following 272-residue polypeptide: Shikimate dehydrogenase (NADP(+)) (272 aa).

Shikimate-binding positions include 14–16 (SKS) and threonine 61. Residue lysine 65 is the Proton acceptor of the active site. Glutamate 77 serves as a coordination point for NADP(+). Shikimate contacts are provided by asparagine 86 and aspartate 102. Residues 126-130 (GAGGA), 149-154 (NRTVSR), and methionine 213 each bind NADP(+). Tyrosine 215 provides a ligand contact to shikimate. Glycine 237 lines the NADP(+) pocket.

The protein belongs to the shikimate dehydrogenase family. Homodimer.

It carries out the reaction shikimate + NADP(+) = 3-dehydroshikimate + NADPH + H(+). Its pathway is metabolic intermediate biosynthesis; chorismate biosynthesis; chorismate from D-erythrose 4-phosphate and phosphoenolpyruvate: step 4/7. Functionally, involved in the biosynthesis of the chorismate, which leads to the biosynthesis of aromatic amino acids. Catalyzes the reversible NADPH linked reduction of 3-dehydroshikimate (DHSA) to yield shikimate (SA). This Escherichia coli O81 (strain ED1a) protein is Shikimate dehydrogenase (NADP(+)).